Consider the following 435-residue polypeptide: Membrane-bound ghrelin O-acyltransferase MBOAT4 (435 aa).

At 1-5 the chain is on the lumenal side; the sequence is MDWLQ. Residues 6–26 form a helical membrane-spanning segment; it reads FFFLHPVSLYQGAAFPFALLF. Residues 27–40 lie on the Cytoplasmic side of the membrane; it reads NYLCITESFPTRAR. Residues 41 to 56 traverse the membrane as a helical segment; that stretch reads YLFLLAGGGVLALAAM. The Lumenal portion of the chain corresponds to 57-59; sequence GPY. The chain crosses the membrane as a helical span at residues 60–76; that stretch reads ALLIFIPALCAVAMISS. Residues 77–82 are Cytoplasmic-facing; sequence LSPQEV. Residues 83-101 traverse the membrane as a helical segment; that stretch reads HGLTFFFQMGWQTLCHLGL. The Lumenal segment spans residues 102–120; the sequence is HYKEYYLCEPPPVRFYITL. Residues 121-136 form a helical membrane-spanning segment; it reads SSLMLLTQRVTSLSLD. Residues 137–206 lie on the Cytoplasmic side of the membrane; it reads ISEGKVEAAW…YPSISFWALT (70 aa). Residues 207–227 traverse the membrane as a helical segment; sequence WRGLQILGLECLKVALRRVVS. Residues 228-240 are Lumenal-facing; the sequence is AGAGLDDCQRLEC. A helical transmembrane segment spans residues 241–261; the sequence is IYIMWSTAGLFKLTYYSHWIL. Over 262–324 the chain is Cytoplasmic; that stretch reads DDSLLHAAGF…KRLVFQRSRR (63 aa). Active-site residues include asparagine 307 and histidine 338. Residues 325–338 form a helical membrane-spanning segment; it reads WPVLQTFAFSAWWH. Residues 339–340 are Lumenal-facing; sequence GL. Residues 341–357 traverse the membrane as a helical segment; the sequence is HPGQVFGFLCWSVMVKA. Topologically, residues 358–376 are cytoplasmic; sequence DYLIHTFANGCIRSWPLRL. Residues 377–397 form a helical membrane-spanning segment; sequence LYRSLTWAHTQIIIAYVMLAV. The Lumenal portion of the chain corresponds to 398-407; it reads EGRSFSSLCR. A helical transmembrane segment spans residues 408 to 428; it reads LCCSYNSIFPVTYCLLLFLLA. Over 429-435 the chain is Cytoplasmic; sequence RRKHKCN.

The protein belongs to the membrane-bound acyltransferase family. In terms of assembly, monomer. In terms of processing, not glycosylated.

Its subcellular location is the endoplasmic reticulum membrane. The enzyme catalyses octanoyl-CoA + L-seryl-[protein] = O-octanoyl-L-seryl-[protein] + CoA. It catalyses the reaction decanoyl-CoA + L-seryl-[protein] = O-decanoyl-L-seryl-[protein] + CoA. The catalysed reaction is L-seryl-[protein] + acetyl-CoA = O-acetyl-L-seryl-[protein] + CoA. It carries out the reaction L-seryl-[protein] + butanoyl-CoA = O-butanoyl-L-seryl-[protein] + CoA. The enzyme catalyses pentanoyl-CoA + L-seryl-[protein] = O-pentanoyl-L-seryl-[protein] + CoA. It catalyses the reaction hexanoyl-CoA + L-seryl-[protein] = O-hexanoyl-L-seryl-[protein] + CoA. The catalysed reaction is heptanoyl-CoA + L-seryl-[protein] = O-heptanoyl-L-seryl-[protein] + CoA. It carries out the reaction nonanoyl-CoA + L-seryl-[protein] = O-nonanoyl-L-seryl-[protein] + CoA. The enzyme catalyses L-seryl-[protein] + dodecanoyl-CoA = O-dodecanoyl-L-seryl-[protein] + CoA. It catalyses the reaction L-seryl-[protein] + tetradecanoyl-CoA = O-tetradecanoyl-L-seryl-[protein] + CoA. The catalysed reaction is a fatty acyl-CoA + L-seryl-[protein] = O-fatty acyl-L-seryl-[protein] + CoA. In terms of biological role, catalyzes ghrelin acylation at 'Ser-3' using preferentially octanoyl-CoA, hexanoyl-CoA and decanoyl-CoA as acyl-CoA donors leading to ghrelin activity. In vitro uses also acyl-CoA donors of different lengths from short-chain (C2) to long-chain fatty acids (C16) knowing that acyl-CoA donors from butanoyl-CoA (C4) to dodecanoyl-CoA (C12) are more efficient compared to longer acyl-CoA donors, such as myristoyl-CoA (C14) and palmitoyl-CoA (C16) that are not efficient. The sequence is that of Membrane-bound ghrelin O-acyltransferase MBOAT4 from Rattus norvegicus (Rat).